Here is a 251-residue protein sequence, read N- to C-terminus: Flap endonuclease Xni (251 aa).

Aspartate 104 is a Mg(2+) binding site. The region spanning 160 to 249 (VQPQQLPDYW…IDGNLQQLRL (90 aa)) is the 5'-3' exonuclease domain. Leucine 171, alanine 172, proline 180, valine 182, and isoleucine 185 together coordinate K(+). The interval 184 to 189 (GIGPKS) is interaction with DNA.

This sequence belongs to the Xni family. It depends on Mg(2+) as a cofactor. Requires K(+) as cofactor.

In terms of biological role, has flap endonuclease activity. During DNA replication, flap endonucleases cleave the 5'-overhanging flap structure that is generated by displacement synthesis when DNA polymerase encounters the 5'-end of a downstream Okazaki fragment. This Shigella flexneri serotype 5b (strain 8401) protein is Flap endonuclease Xni.